Reading from the N-terminus, the 309-residue chain is MVGDLLGLFAAHFAHLHGLNTIVFDSLSEVGGQPQMLYPFKQINDIPAYNSISGTDLIQKLKHDIKNETEIITNHKVVDVTKQSDGFIIDNIIYARSIIIATGAGAFKPKELPLKISDEIKEKIHYFVKDPSQFKNQTIGVFGGGDSALDLALEVAKYANVKLIHRRDQFRGLESNVKKLKSLKNVEILTPYLPKKIELINNQLDISLKKMGVEQLRNVQLDQIVVAYGFRANNRFAKKWGINLEQSNIPVDPTMKTNIDGIYAAGDVVTYPGRVPLIALGFGEAQIAITSIMRNLFPEKSLTIHSTSI.

The FAD site is built by D25, Q33, Y38, V77, F107, D267, and T307.

This sequence belongs to the ferredoxin--NADP reductase type 2 family. Homodimer. Requires FAD as cofactor.

It catalyses the reaction 2 reduced [2Fe-2S]-[ferredoxin] + NADP(+) + H(+) = 2 oxidized [2Fe-2S]-[ferredoxin] + NADPH. The sequence is that of Ferredoxin--NADP reductase from Lactobacillus acidophilus (strain ATCC 700396 / NCK56 / N2 / NCFM).